The chain runs to 187 residues: Elongation factor P (187 aa).

Belongs to the elongation factor P family.

The protein resides in the cytoplasm. The protein operates within protein biosynthesis; polypeptide chain elongation. Its function is as follows. Involved in peptide bond synthesis. Stimulates efficient translation and peptide-bond synthesis on native or reconstituted 70S ribosomes in vitro. Probably functions indirectly by altering the affinity of the ribosome for aminoacyl-tRNA, thus increasing their reactivity as acceptors for peptidyl transferase. In Mycolicibacterium vanbaalenii (strain DSM 7251 / JCM 13017 / BCRC 16820 / KCTC 9966 / NRRL B-24157 / PYR-1) (Mycobacterium vanbaalenii), this protein is Elongation factor P.